Reading from the N-terminus, the 753-residue chain is Replication restart protein PriA (753 aa).

The 168-residue stretch at 228-395 (SLITTKFQTC…LSKKYTLSVL (168 aa)) folds into the Helicase ATP-binding domain. 241 to 248 (GVTGSGKT) serves as a coordination point for ATP. A DEAH box motif is present at residues 337-340 (DEEH). Zn(2+)-binding residues include Cys-458, Cys-461, Cys-467, Cys-470, Cys-485, Cys-488, Cys-499, and Cys-502. The 156-residue stretch at 491–646 (RLSKPITSCP…DFPAFYKEEI (156 aa)) folds into the Helicase C-terminal domain.

Belongs to the helicase family. PriA subfamily. In terms of assembly, component of the replication restart primosome. Zn(2+) is required as a cofactor.

It carries out the reaction Couples ATP hydrolysis with the unwinding of duplex DNA by translocating in the 3'-5' direction.. The catalysed reaction is ATP + H2O = ADP + phosphate + H(+). Its function is as follows. Initiates the restart of stalled replication forks, which reloads the replicative helicase on sites other than the origin of replication. Recognizes and binds to abandoned replication forks and remodels them to uncover a helicase loading site. Promotes assembly of the primosome at these replication forks. The sequence is that of Replication restart protein PriA from Chlamydia muridarum (strain MoPn / Nigg).